A 1949-amino-acid polypeptide reads, in one-letter code: Non-structural replication polyprotein (1949 aa).

The disordered stretch occupies residues 77–103 (HRPPPPCTRLTPRPPPPTPAPPSASTL). A compositionally biased stretch (pro residues) spans 80 to 98 (PPPCTRLTPRPPPPTPAPP). Residues 171 to 341 (TSYGHQSHPH…TQPLTATQWL (171 aa)) form the Alphavirus-like MT domain. Residues 674–773 (PSSHPRRARR…APVTARPSPL (100 aa)) are disordered. Composition is skewed to pro residues over residues 685-731 (PPLP…PPAT) and 740-753 (TPIP…PLTF). The Peptidase C21 domain occupies 762–922 (PDAPVTARPS…CLTGGAPSPV (161 aa)). Active-site for protease activity residues include Cys814 and His900. The disordered stretch occupies residues 924–948 (SGPKASASLPRARFGPRPEAPRPPL). The 159-residue stretch at 1017–1175 (DRTNLLPLIQ…HLRPFIDFYC (159 aa)) folds into the (+)RNA virus helicase ATP-binding domain. An ATP-binding site is contributed by 1048–1055 (GFAGCGKS). Positions 1176–1308 (LWTRRLPRLV…DLLAHEADPS (133 aa)) constitute a (+)RNA virus helicase C-terminal domain. The region spanning 1682-1788 (SVHLANDYTA…DRVPPMNPSW (107 aa)) is the RdRp catalytic domain.

The protein belongs to the Tymoviridae non-structural replication polyprotein family. In terms of processing, specific enzymatic cleavages by the host yield mature proteins.

It carries out the reaction RNA(n) + a ribonucleoside 5'-triphosphate = RNA(n+1) + diphosphate. Functionally, acts as a cysteine protease, methyltransferase and deubiquitinase. The cysteine protease activity cleaves the polyprotein giving rise to mature proteins. The methyltransferase domain is probably involved in viral RNA capping. In terms of biological role, RNA-directed RNA polymerase is responsible for the replication and transcription of the genome. The protein is Non-structural replication polyprotein of Vitis vinifera (Grape).